A 412-amino-acid chain; its full sequence is Divalent metal cation transporter MntH (412 aa).

11 consecutive transmembrane segments (helical) span residues 19–39 (FALM…GNFA), 46–66 (ASFG…AMLI), 94–114 (VWFY…AEFI), 122–142 (LILG…TFLI), 155–175 (LVIG…LVFS), 196–216 (AVFL…IYLH), 241–261 (IAMT…AAAF), 290–310 (IFGL…TLAG), 329–349 (SVTM…TRIL), 350–370 (VMSQ…LLIF), and 389–409 (IGWM…IGTL).

It belongs to the NRAMP family.

The protein resides in the cell inner membrane. Functionally, h(+)-stimulated, divalent metal cation uptake system. The protein is Divalent metal cation transporter MntH of Enterobacter sp. (strain 638).